Consider the following 113-residue polypeptide: Cell division protein FtsB (113 aa).

Residues 1 to 3 lie on the Cytoplasmic side of the membrane; it reads MRL. The helical transmembrane segment at 4–21 threads the bilayer; it reads ISLLLFVLLLAIQYPLWL. The Periplasmic segment spans residues 22 to 113; sequence GKGGWLRVWE…PNSPAATGRH (92 aa). The stretch at 34–63 forms a coiled coil; it reads HQVQEQATRNQMLKLRNAKLEGEVKDLQDG. The tract at residues 93–113 is disordered; it reads KVSATPPLPPPPNSPAATGRH.

It belongs to the FtsB family. As to quaternary structure, part of a complex composed of FtsB, FtsL and FtsQ.

The protein localises to the cell inner membrane. Essential cell division protein. May link together the upstream cell division proteins, which are predominantly cytoplasmic, with the downstream cell division proteins, which are predominantly periplasmic. The sequence is that of Cell division protein FtsB from Cupriavidus pinatubonensis (strain JMP 134 / LMG 1197) (Cupriavidus necator (strain JMP 134)).